The following is a 116-amino-acid chain: Large ribosomal subunit protein bL20c (116 aa).

It belongs to the bacterial ribosomal protein bL20 family.

It localises to the plastid. Its subcellular location is the chloroplast. Functionally, binds directly to 23S ribosomal RNA and is necessary for the in vitro assembly process of the 50S ribosomal subunit. It is not involved in the protein synthesizing functions of that subunit. In Cryptomeria japonica (Japanese cedar), this protein is Large ribosomal subunit protein bL20c.